The chain runs to 285 residues: MKNLLEQIQSRLDELNKAERKVAEVILQNPQQATRFSIAALAQAAAVSEPTVNRFCRSFGMSGYPELKIQLAQSLASGAAFVTQAVAEDDGPEAYTRKIFSNTIASLDSAHKLLDPRVIDRAVDLLIQARQIHFFGLGASASVALDAQHKFFRFNLAVSAQADVLMQRMIASVAHTGDLFVVISYTGRTRELVEVAHLARENGASVLGLTAAGSPLARASTLCLDIPLPEDTDIYMPMTSRIVQLTVLDVLATGVTLRRGVDFQPHLRRIKESLVPTRYPLDEDN.

Positions 2 to 78 (KNLLEQIQSR…IQLAQSLASG (77 aa)) constitute an HTH rpiR-type domain. Positions 38–57 (IAALAQAAAVSEPTVNRFCR) form a DNA-binding region, H-T-H motif. In terms of domain architecture, SIS spans 122-261 (AVDLLIQARQ…ATGVTLRRGV (140 aa)).

In terms of biological role, involved in regulation of glucose metabolism. Transcriptional repressor of the gap-1 gene and of the edd-glk-gltR-2 and zwf-pgl-eda operons. Acts by binding directly to an inverted pseudopalindromic sequence in the promoter region. The chain is HTH-type transcriptional regulator HexR from Pseudomonas aeruginosa (strain ATCC 15692 / DSM 22644 / CIP 104116 / JCM 14847 / LMG 12228 / 1C / PRS 101 / PAO1).